The sequence spans 338 residues: L-serine dehydratase (338 aa).

Residue lysine 39 is modified to N6-(pyridoxal phosphate)lysine.

The protein belongs to the serine/threonine dehydratase family. Pyridoxal 5'-phosphate is required as a cofactor.

Its subcellular location is the cytoplasm. It catalyses the reaction L-serine = pyruvate + NH4(+). Its pathway is carbohydrate biosynthesis; gluconeogenesis. The chain is L-serine dehydratase (SDL1) from Saccharomyces cerevisiae (strain AWRI1631) (Baker's yeast).